The sequence spans 404 residues: SAC3 domain-containing protein 1 (404 aa).

Disordered regions lie at residues 1 to 58 (MAGR…GTCP) and 77 to 117 (RLEV…QLRP). Residues 12–21 (PPRPAAPHPR) show a composition bias toward pro residues. The segment covering 87–101 (DPPRADPQRAVKEYS) has biased composition (basic and acidic residues). The region spanning 203–379 (QVQEGFGSLR…TCKVLVESKL (177 aa)) is the PCI domain. Ser402 carries the post-translational modification Phosphoserine.

Belongs to the SAC3 family. As to quaternary structure, may be part of a SEM1-containing complex.

The protein localises to the cytoplasm. The protein resides in the cytoskeleton. It is found in the microtubule organizing center. It localises to the centrosome. Its subcellular location is the spindle. In terms of biological role, involved in centrosome duplication and mitotic progression. The sequence is that of SAC3 domain-containing protein 1 (SAC3D1) from Homo sapiens (Human).